Here is a 346-residue protein sequence, read N- to C-terminus: Phosphoribosylformylglycinamidine cyclo-ligase (346 aa).

This sequence belongs to the AIR synthase family.

It localises to the cytoplasm. It carries out the reaction 2-formamido-N(1)-(5-O-phospho-beta-D-ribosyl)acetamidine + ATP = 5-amino-1-(5-phospho-beta-D-ribosyl)imidazole + ADP + phosphate + H(+). It participates in purine metabolism; IMP biosynthesis via de novo pathway; 5-amino-1-(5-phospho-D-ribosyl)imidazole from N(2)-formyl-N(1)-(5-phospho-D-ribosyl)glycinamide: step 2/2. The polypeptide is Phosphoribosylformylglycinamidine cyclo-ligase (Vibrio vulnificus (strain YJ016)).